We begin with the raw amino-acid sequence, 164 residues long: T-cell surface glycoprotein CD3 zeta chain (164 aa).

An N-terminal signal peptide occupies residues 1–21 (MKWKALFTAAILQAQLPITEA). Residues 22 to 30 (QSFGLLDPK) are Extracellular-facing. A helical membrane pass occupies residues 31-51 (LCYLLDGILFIYGVILTALFL). Over 52-164 (RVKFSRSADA…ALHMQALPPR (113 aa)) the chain is Cytoplasmic. Ser58 bears the Phosphoserine mark. 3 consecutive ITAM domains span residues 61-89 (APAY…LDKR), 100-128 (PQRR…EIGM), and 131-159 (ERRR…LHMQ). Phosphotyrosine occurs at positions 64, 72, 83, 111, 123, 142, and 153. Positions 83 to 96 (YDVLDKRRGRDPEM) are enriched in basic and acidic residues. The segment at 83–111 (YDVLDKRRGRDPEMGGKPQRRKNPQEGLY) is disordered. The disordered stretch occupies residues 128-154 (MKGERRRGKGHDGLYQGLSTATKDTYD).

This sequence belongs to the CD3Z/FCER1G family. In terms of assembly, the TCR-CD3 complex is composed of a CD3D/CD3E and a CD3G/CD3E heterodimers that preferentially associate with TCRalpha and TCRbeta, respectively, to form TCRalpha/CD3E/CD3G and TCRbeta/CD3G/CD3E trimers. In turn, the hexamer interacts with CD3Z homodimer to form the TCR-CD3 complex. Alternatively, TCRalpha and TCRbeta can be replaced by TCRgamma and TCRdelta. Interacts with SLA. Interacts with TRAT1. Interacts with DOCK2. Interacts with SLA2. Interacts with SHB. Interacts with ZAP70. Interacts (tyrosine phosphorylated) with SHC1 (via SH2 domain). Interacts with PTPRC. Interacts with CRK; this interaction regulates CD3Z phosphorylation. Interacts (on T cell side) with CD81, ICAM1 and CD9 at immunological synapses between antigen-presenting cells and T cells. Interacts with CD160. Interacts with LY6E. The signaling subunit of immunoglobulin gamma (IgG) Fc receptor complex. As a homodimer or a heterodimer with FCER1G, associates with the ligand binding subunit FCGR3A (via transmembrane domain); this interaction is a prerequisite for Fc receptor complex expression on the cell surface. Interacts with CD5. (Microbial infection) Interacts with HIV-1 Nef; this interaction up-regulates the expression of the Fas ligand (FASLG) at the cell surface. As to quaternary structure, (Microbial infection) Interacts with HIV-2 Nef protein; this interaction induces down-regulation of cell surface TCR/CD3 complexes. In terms of processing, phosphorylated on Tyr residues after T-cell receptor triggering by LCK in association with CD4/CD8. As to expression, CD3Z is expressed in normal lymphoid tissue and in peripheral blood mononuclear cells (PBMCs).

It localises to the cell membrane. In terms of biological role, part of the TCR-CD3 complex present on T-lymphocyte cell surface that plays an essential role in adaptive immune response. When antigen presenting cells (APCs) activate T-cell receptor (TCR), TCR-mediated signals are transmitted across the cell membrane by the CD3 chains CD3D, CD3E, CD3G and CD3Z. All CD3 chains contain immunoreceptor tyrosine-based activation motifs (ITAMs) in their cytoplasmic domain. Upon TCR engagement, these motifs become phosphorylated by Src family protein tyrosine kinases LCK and FYN, resulting in the activation of downstream signaling pathways. CD3Z ITAMs phosphorylation creates multiple docking sites for the protein kinase ZAP70 leading to ZAP70 phosphorylation and its conversion into a catalytically active enzyme. Plays an important role in intrathymic T-cell differentiation. Additionally, participates in the activity-dependent synapse formation of retinal ganglion cells (RGCs) in both the retina and dorsal lateral geniculate nucleus (dLGN). The chain is T-cell surface glycoprotein CD3 zeta chain (CD247) from Homo sapiens (Human).